The chain runs to 442 residues: F-box protein KIB2 (442 aa).

Residues 62–109 (SKQPVLVLDLLRSILERLSFVDFHRGRCISLEWYSASESCLAVKNPTS) form the F-box domain. Residues 236–243 (HKKGDENY) carry the Nuclear localization signal motif.

As to quaternary structure, interacts with ASK7/BIN2/SK21.

It is found in the cytoplasm. The protein localises to the nucleus. The protein resides in the nucleolus. Its function is as follows. Component of SCF(ASK-cullin-F-box) E3 ubiquitin ligase complexes, which may mediate the ubiquitination and subsequent proteasomal degradation of target proteins. Required for brassinosteroid (BR) signal transduction. Mediates ASK7/BIN2/SK21 inactivation both by competing with substrate binding (e.g. BZR1) and by promoting its ubiquitination and subsequent proteasomal degradation. The chain is F-box protein KIB2 from Arabidopsis thaliana (Mouse-ear cress).